A 179-amino-acid chain; its full sequence is Cytochrome b6-f complex iron-sulfur subunit (179 aa).

A helical membrane pass occupies residues 21 to 43 (LLTFGSVTGVALGALYPVVNYFI). One can recognise a Rieske domain in the interval 61 to 162 (GNDVVLSKFL…VSVTDDKVFL (102 aa)). C108, H110, C126, and H129 together coordinate [2Fe-2S] cluster. C113 and C128 are disulfide-bonded.

This sequence belongs to the Rieske iron-sulfur protein family. In terms of assembly, the 4 large subunits of the cytochrome b6-f complex are cytochrome b6, subunit IV (17 kDa polypeptide, PetD), cytochrome f and the Rieske protein, while the 4 small subunits are PetG, PetL, PetM and PetN. The complex functions as a dimer. [2Fe-2S] cluster is required as a cofactor.

The protein localises to the cellular thylakoid membrane. It catalyses the reaction 2 oxidized [plastocyanin] + a plastoquinol + 2 H(+)(in) = 2 reduced [plastocyanin] + a plastoquinone + 4 H(+)(out). In terms of biological role, component of the cytochrome b6-f complex, which mediates electron transfer between photosystem II (PSII) and photosystem I (PSI), cyclic electron flow around PSI, and state transitions. This is Cytochrome b6-f complex iron-sulfur subunit from Synechococcus elongatus (strain ATCC 33912 / PCC 7942 / FACHB-805) (Anacystis nidulans R2).